A 254-amino-acid polypeptide reads, in one-letter code: Pimeloyl-[acyl-carrier protein] methyl ester esterase (254 aa).

One can recognise an AB hydrolase-1 domain in the interval 14-242 (LVLLHGWGMN…ASHAPFISHP (229 aa)). Residues tryptophan 20, 82-83 (SL), and 143-147 (FLAIQ) each bind substrate. Serine 82 (nucleophile) is an active-site residue. Catalysis depends on residues aspartate 207 and histidine 235. Position 235 (histidine 235) interacts with substrate.

The protein belongs to the AB hydrolase superfamily. Carboxylesterase BioH family. In terms of assembly, monomer.

The protein localises to the cytoplasm. It catalyses the reaction 6-carboxyhexanoyl-[ACP] methyl ester + H2O = 6-carboxyhexanoyl-[ACP] + methanol + H(+). The protein operates within cofactor biosynthesis; biotin biosynthesis. The physiological role of BioH is to remove the methyl group introduced by BioC when the pimeloyl moiety is complete. It allows to synthesize pimeloyl-ACP via the fatty acid synthetic pathway through the hydrolysis of the ester bonds of pimeloyl-ACP esters. This chain is Pimeloyl-[acyl-carrier protein] methyl ester esterase, found in Aeromonas salmonicida (strain A449).